Reading from the N-terminus, the 158-residue chain is Transcription elongation factor GreA (158 aa).

The stretch at 45–72 forms a coiled coil; the sequence is AEYHAAREQQSFIEGRIKQLEGELSHAE.

Belongs to the GreA/GreB family.

Functionally, necessary for efficient RNA polymerase transcription elongation past template-encoded arresting sites. The arresting sites in DNA have the property of trapping a certain fraction of elongating RNA polymerases that pass through, resulting in locked ternary complexes. Cleavage of the nascent transcript by cleavage factors such as GreA or GreB allows the resumption of elongation from the new 3'terminus. GreA releases sequences of 2 to 3 nucleotides. This chain is Transcription elongation factor GreA, found in Xylella fastidiosa (strain 9a5c).